Here is a 132-residue protein sequence, read N- to C-terminus: Histone H2A.2 (132 aa).

This sequence belongs to the histone H2A family. In terms of assembly, the nucleosome is a histone octamer containing two molecules each of H2A, H2B, H3 and H4 assembled in one H3-H4 heterotetramer and two H2A-H2B heterodimers. The octamer wraps approximately 147 bp of DNA.

The protein resides in the nucleus. It localises to the chromosome. Its function is as follows. Core component of nucleosome. Nucleosomes wrap and compact DNA into chromatin, limiting DNA accessibility to the cellular machineries which require DNA as a template. Histones thereby play a central role in transcription regulation, DNA repair, DNA replication and chromosomal stability. DNA accessibility is regulated via a complex set of post-translational modifications of histones, also called histone code, and nucleosome remodeling. The chain is Histone H2A.2 from Leishmania infantum.